Here is a 502-residue protein sequence, read N- to C-terminus: Cytochrome c-552 (502 aa).

Residues 1–25 (MKYLTKSRVIATIAMLGCLSVSAWA) form the signal peptide. Heme c is bound at residue H105. Positions 133, 136, and 137 each coordinate heme. Residues C171, C174, H175, C220, C223, and H224 each coordinate heme c. Residues E226, Y227, K271, and Q273 each coordinate Ca(2+). Y227 contacts substrate. Residue H274 participates in substrate binding. Heme c is bound by residues H285, C292, C295, H296, H311, C324, C327, H328, and H403. A disordered region spans residues 481–502 (RERGLLPEVTPKSVTTPKVDAK).

This sequence belongs to the cytochrome c-552 family. It depends on Ca(2+) as a cofactor. Heme c is required as a cofactor.

It localises to the periplasm. The catalysed reaction is 6 Fe(III)-[cytochrome c] + NH4(+) + 2 H2O = 6 Fe(II)-[cytochrome c] + nitrite + 8 H(+). Its pathway is nitrogen metabolism; nitrate reduction (assimilation). Functionally, catalyzes the reduction of nitrite to ammonia, consuming six electrons in the process. In Haemophilus ducreyi (strain 35000HP / ATCC 700724), this protein is Cytochrome c-552.